Here is a 692-residue protein sequence, read N- to C-terminus: E3 ubiquitin-protein ligase brl1 (692 aa).

The stretch at S302–K370 forms a coiled coil. Residues C639–E679 form an RING-type zinc finger.

It belongs to the BRE1 family. In terms of assembly, component of the histone H2B ubiquitin ligase complex (HULC) composed of at least brl1, brl2, rhp6 and shf1.

Its subcellular location is the nucleus. The catalysed reaction is S-ubiquitinyl-[E2 ubiquitin-conjugating enzyme]-L-cysteine + [acceptor protein]-L-lysine = [E2 ubiquitin-conjugating enzyme]-L-cysteine + N(6)-ubiquitinyl-[acceptor protein]-L-lysine.. It functions in the pathway protein modification; protein ubiquitination. In terms of biological role, E3 ubiquitin-protein ligase which belongs to the histone H2B ubiquitin ligase complex (HULC) which mediates monoubiquitination of histone H2B to form H2BK123ub1. H2BK123ub1 gives a specific tag for epigenetic transcriptional activation and is also a prerequisite for H3K4me and H3K79me formation. In Schizosaccharomyces pombe (strain 972 / ATCC 24843) (Fission yeast), this protein is E3 ubiquitin-protein ligase brl1 (brl1).